We begin with the raw amino-acid sequence, 406 residues long: Argininosuccinate synthase (406 aa).

ATP is bound by residues 13 to 21 and A40; that span reads AYSGGLDTS. The L-citrulline site is built by Y91 and S96. G121 is a binding site for ATP. Residues T123, N127, and D128 each coordinate L-aspartate. N127 lines the L-citrulline pocket. Positions 131, 180, 189, 265, and 277 each coordinate L-citrulline.

It belongs to the argininosuccinate synthase family. Type 1 subfamily. As to quaternary structure, homotetramer.

It is found in the cytoplasm. It catalyses the reaction L-citrulline + L-aspartate + ATP = 2-(N(omega)-L-arginino)succinate + AMP + diphosphate + H(+). Its pathway is amino-acid biosynthesis; L-arginine biosynthesis; L-arginine from L-ornithine and carbamoyl phosphate: step 2/3. The polypeptide is Argininosuccinate synthase (Syntrophotalea carbinolica (strain DSM 2380 / NBRC 103641 / GraBd1) (Pelobacter carbinolicus)).